Here is a 137-residue protein sequence, read N- to C-terminus: Active regulator of SIRT1 (137 aa).

R7 is modified (citrulline). Positions 14–24 (GAPEAPGAAPG) are enriched in low complexity. The interval 14–58 (GAPEAPGAAPGHTKPSQAPMKRTRKAKATQAQKLRNSAKGKVPKS) is disordered. S84 carries the post-translational modification Phosphoserine. Residues 96 to 120 (RQNRGRKACDRPVTKTKKKKKAEGT) form a disordered region.

This sequence belongs to the AROS family. In terms of assembly, part of the small subunit (SSU) processome, composed of more than 70 proteins and the RNA chaperone small nucleolar RNA (snoRNA) U3. Interacts with RPS19; the interaction is direct and mediates the integration of RPS19 in state post-A1. Interacts with SIRT1. Post-translationally, citrullinated by PADI4.

The protein localises to the nucleus. It is found in the nucleolus. In terms of biological role, part of the small subunit (SSU) processome, first precursor of the small eukaryotic ribosomal subunit. During the assembly of the SSU processome in the nucleolus, many ribosome biogenesis factors, an RNA chaperone and ribosomal proteins associate with the nascent pre-rRNA and work in concert to generate RNA folding, modifications, rearrangements and cleavage as well as targeted degradation of pre-ribosomal RNA by the RNA exosome. Acts as a chaperone that specifically mediates the integration of RPS19 in state post-A1. Direct regulator of SIRT1. Enhances SIRT1-mediated deacetylation of p53/TP53, thereby participating in inhibition of p53/TP53-mediated transcriptional activity. This Bos taurus (Bovine) protein is Active regulator of SIRT1 (RPS19BP1).